A 247-amino-acid chain; its full sequence is UPF0273 protein PH0284 (247 aa).

In terms of domain architecture, KaiC spans Arg3–Leu247. Gly30–Thr37 contributes to the ATP binding site.

It belongs to the UPF0273 family.

This Pyrococcus horikoshii (strain ATCC 700860 / DSM 12428 / JCM 9974 / NBRC 100139 / OT-3) protein is UPF0273 protein PH0284.